Reading from the N-terminus, the 400-residue chain is ATP-dependent RNA helicase fal-1 (400 aa).

The Q motif motif lies at 26-54; it reads PTFESMSLKESLLRGIYAYGYESPSAVQS. In terms of domain architecture, Helicase ATP-binding spans 57-227; the sequence is IVQICKGRDT…TKFMTDPVRI (171 aa). 70-77 contributes to the ATP binding site; that stretch reads AQSGTGKT. Residues 175-178 carry the DEAD box motif; that stretch reads DEAD. In terms of domain architecture, Helicase C-terminal spans 238-399; sequence GLKQYFIAVE…EMPMNVADLI (162 aa).

Belongs to the DEAD box helicase family. DDX48/FAL1 subfamily.

Its subcellular location is the nucleus. The protein resides in the nucleolus. The catalysed reaction is ATP + H2O = ADP + phosphate + H(+). Functionally, ATP-dependent RNA helicase involved in 40S ribosomal subunit biogenesis. Required for the processing and cleavage of 35S pre-rRNA at sites A0, A1, and A2, leading to mature 18S rRNA. This chain is ATP-dependent RNA helicase fal-1 (fal-1), found in Neurospora crassa (strain ATCC 24698 / 74-OR23-1A / CBS 708.71 / DSM 1257 / FGSC 987).